The primary structure comprises 120 residues: Large ribosomal subunit protein bL20 (120 aa).

This sequence belongs to the bacterial ribosomal protein bL20 family.

Its function is as follows. Binds directly to 23S ribosomal RNA and is necessary for the in vitro assembly process of the 50S ribosomal subunit. It is not involved in the protein synthesizing functions of that subunit. The chain is Large ribosomal subunit protein bL20 from Ligilactobacillus salivarius (strain UCC118) (Lactobacillus salivarius).